Here is a 334-residue protein sequence, read N- to C-terminus: L-lactate dehydrogenase B chain (334 aa).

N-acetylalanine is present on alanine 2. Lysine 7 carries the post-translational modification N6-acetyllysine. NAD(+) contacts are provided by residues 30–58 (GQVGMACAISILGKSLADELALVDVLEDK) and arginine 100. Serine 44 bears the Phosphoserine mark. Position 58 is an N6-acetyllysine (lysine 58). Arginine 107 is a substrate binding site. Residue lysine 119 is modified to N6-acetyllysine. Asparagine 139 provides a ligand contact to NAD(+). Residues asparagine 139 and arginine 170 each coordinate substrate. Catalysis depends on histidine 194, which acts as the Proton acceptor. Tyrosine 240 carries the phosphotyrosine modification. Threonine 249 contributes to the substrate binding site. Position 329 is an N6-acetyllysine (lysine 329).

The protein belongs to the LDH/MDH superfamily. LDH family. As to quaternary structure, homotetramer. Interacts with PTEN upstream reading frame protein MP31; the interaction leads to inhibition of mitochondrial lactate dehydrogenase activity, preventing conversion of lactate to pyruvate in mitochondria.

It is found in the cytoplasm. Its subcellular location is the mitochondrion inner membrane. It catalyses the reaction (S)-lactate + NAD(+) = pyruvate + NADH + H(+). It participates in fermentation; pyruvate fermentation to lactate; (S)-lactate from pyruvate: step 1/1. In terms of biological role, interconverts simultaneously and stereospecifically pyruvate and lactate with concomitant interconversion of NADH and NAD(+). The protein is L-lactate dehydrogenase B chain (Ldhb) of Rattus norvegicus (Rat).